Consider the following 327-residue polypeptide: Annexin A8 (327 aa).

Annexin repeat units follow at residues Phe-21–Tyr-92, Pro-93–Gln-164, Gly-177–Lys-249, and Asn-253–Gly-324. Residues Met-266, Gly-268, Gly-270, and Asp-310 each coordinate Ca(2+).

The protein belongs to the annexin family.

This protein is an anticoagulant protein that acts as an indirect inhibitor of the thromboplastin-specific complex, which is involved in the blood coagulation cascade. This Homo sapiens (Human) protein is Annexin A8.